The chain runs to 620 residues: Probable indole-3-acetic acid-amido synthetase GH3.7 (620 aa).

Belongs to the IAA-amido conjugating enzyme family. As to expression, ubiquitous.

Functionally, may catalyze the synthesis of indole-3-acetic acid (IAA)-amino acid conjugates, providing a mechanism for the plant to cope with the presence of excess auxin. The protein is Probable indole-3-acetic acid-amido synthetase GH3.7 (GH3.7) of Oryza sativa subsp. japonica (Rice).